The primary structure comprises 290 residues: Small ribosomal subunit biogenesis GTPase RsgA (290 aa).

The CP-type G domain occupies 62–219; it reads RTCLKRPAVA…VADTPGFSRL (158 aa). GTP contacts are provided by residues 111-114 and 161-169; these read NKAD and GPSGVGKSS. Positions 243, 248, 250, and 256 each coordinate Zn(2+).

It belongs to the TRAFAC class YlqF/YawG GTPase family. RsgA subfamily. Monomer. Associates with 30S ribosomal subunit, binds 16S rRNA. It depends on Zn(2+) as a cofactor.

It is found in the cytoplasm. One of several proteins that assist in the late maturation steps of the functional core of the 30S ribosomal subunit. Helps release RbfA from mature subunits. May play a role in the assembly of ribosomal proteins into the subunit. Circularly permuted GTPase that catalyzes slow GTP hydrolysis, GTPase activity is stimulated by the 30S ribosomal subunit. This is Small ribosomal subunit biogenesis GTPase RsgA from Moorella thermoacetica (strain ATCC 39073 / JCM 9320).